The chain runs to 179 residues: Adenine phosphoribosyltransferase (179 aa).

Belongs to the purine/pyrimidine phosphoribosyltransferase family. In terms of assembly, homodimer.

It is found in the cytoplasm. It carries out the reaction AMP + diphosphate = 5-phospho-alpha-D-ribose 1-diphosphate + adenine. Its pathway is purine metabolism; AMP biosynthesis via salvage pathway; AMP from adenine: step 1/1. Its function is as follows. Catalyzes a salvage reaction resulting in the formation of AMP, that is energically less costly than de novo synthesis. The polypeptide is Adenine phosphoribosyltransferase (Nitrobacter hamburgensis (strain DSM 10229 / NCIMB 13809 / X14)).